The chain runs to 226 residues: Phosphoribosyl-dephospho-CoA transferase (226 aa).

Active-site residues include Asp-148 and Asp-150.

The protein belongs to the MdcG family.

The catalysed reaction is apo-[malonate decarboxylase ACP] + 2'-(5''-triphospho-alpha-D-ribosyl)-3'-dephospho-CoA = holo-[malonate decarboxylase ACP] + diphosphate. Functionally, transfers 2'-(5-triphosphoribosyl)-3'-dephosphocoenzyme-A to the apo-[acyl-carrier-protein] of the malonate decarboxylase to yield holo-[acyl-carrier-protein]. In Bradyrhizobium diazoefficiens (strain JCM 10833 / BCRC 13528 / IAM 13628 / NBRC 14792 / USDA 110), this protein is Phosphoribosyl-dephospho-CoA transferase.